Here is a 97-residue protein sequence, read N- to C-terminus: Aspartyl/glutamyl-tRNA(Asn/Gln) amidotransferase subunit C (97 aa).

Residues 59 to 78 are disordered; that stretch reads STGKLRPDEPAQPLSRDDAL. Over residues 63-78 the composition is skewed to basic and acidic residues; the sequence is LRPDEPAQPLSRDDAL.

Belongs to the GatC family. As to quaternary structure, heterotrimer of A, B and C subunits.

The enzyme catalyses L-glutamyl-tRNA(Gln) + L-glutamine + ATP + H2O = L-glutaminyl-tRNA(Gln) + L-glutamate + ADP + phosphate + H(+). It carries out the reaction L-aspartyl-tRNA(Asn) + L-glutamine + ATP + H2O = L-asparaginyl-tRNA(Asn) + L-glutamate + ADP + phosphate + 2 H(+). Allows the formation of correctly charged Asn-tRNA(Asn) or Gln-tRNA(Gln) through the transamidation of misacylated Asp-tRNA(Asn) or Glu-tRNA(Gln) in organisms which lack either or both of asparaginyl-tRNA or glutaminyl-tRNA synthetases. The reaction takes place in the presence of glutamine and ATP through an activated phospho-Asp-tRNA(Asn) or phospho-Glu-tRNA(Gln). This Metallosphaera sedula (strain ATCC 51363 / DSM 5348 / JCM 9185 / NBRC 15509 / TH2) protein is Aspartyl/glutamyl-tRNA(Asn/Gln) amidotransferase subunit C.